The following is a 167-amino-acid chain: CKLF-like MARVEL transmembrane domain-containing protein 7 (167 aa).

Residues 32 to 158 (YPLTHGALFK…SLWLSYKITC (127 aa)) form the MARVEL domain. 4 helical membrane-spanning segments follow: residues 35-55 (THGA…FICV), 69-89 (FEVV…VHLF), 102-122 (LSEL…SIVI), and 132-152 (LVAG…SLWL).

This sequence belongs to the chemokine-like factor family.

Its subcellular location is the membrane. In Mus musculus (Mouse), this protein is CKLF-like MARVEL transmembrane domain-containing protein 7 (Cmtm7).